Consider the following 51-residue polypeptide: Insulin (51 aa).

Disulfide bonds link Cys7–Cys37, Cys19–Cys50, and Cys36–Cys41.

Belongs to the insulin family. Heterodimer of a B chain and an A chain linked by two disulfide bonds.

Its subcellular location is the secreted. Insulin decreases blood glucose concentration. It increases cell permeability to monosaccharides, amino acids and fatty acids. It accelerates glycolysis, the pentose phosphate cycle, and glycogen synthesis in liver. This chain is Insulin (INS), found in Capra hircus (Goat).